A 228-amino-acid chain; its full sequence is Protein GrpE (228 aa).

2 disordered regions span residues 1–31 (MADEKNKSQNPDLEQRDINNPRDREALNRAA) and 209–228 (GVSKGGPKATADNGASEGNG).

The protein belongs to the GrpE family. As to quaternary structure, homodimer.

The protein resides in the cytoplasm. Functionally, participates actively in the response to hyperosmotic and heat shock by preventing the aggregation of stress-denatured proteins, in association with DnaK and GrpE. It is the nucleotide exchange factor for DnaK and may function as a thermosensor. Unfolded proteins bind initially to DnaJ; upon interaction with the DnaJ-bound protein, DnaK hydrolyzes its bound ATP, resulting in the formation of a stable complex. GrpE releases ADP from DnaK; ATP binding to DnaK triggers the release of the substrate protein, thus completing the reaction cycle. Several rounds of ATP-dependent interactions between DnaJ, DnaK and GrpE are required for fully efficient folding. This chain is Protein GrpE, found in Brucella anthropi (strain ATCC 49188 / DSM 6882 / CCUG 24695 / JCM 21032 / LMG 3331 / NBRC 15819 / NCTC 12168 / Alc 37) (Ochrobactrum anthropi).